We begin with the raw amino-acid sequence, 508 residues long: Probable malate:quinone oxidoreductase (508 aa).

Belongs to the MQO family. It depends on FAD as a cofactor.

It catalyses the reaction (S)-malate + a quinone = a quinol + oxaloacetate. It functions in the pathway carbohydrate metabolism; tricarboxylic acid cycle; oxaloacetate from (S)-malate (quinone route): step 1/1. The polypeptide is Probable malate:quinone oxidoreductase (Chromohalobacter salexigens (strain ATCC BAA-138 / DSM 3043 / CIP 106854 / NCIMB 13768 / 1H11)).